Consider the following 164-residue polypeptide: UPF0201 protein MA_4659 (164 aa).

The protein belongs to the UPF0201 family.

The sequence is that of UPF0201 protein MA_4659 from Methanosarcina acetivorans (strain ATCC 35395 / DSM 2834 / JCM 12185 / C2A).